We begin with the raw amino-acid sequence, 560 residues long: Arginine--tRNA ligase (560 aa).

The short motif at 122-132 (ANPNGPLHIGH) is the 'HIGH' region element.

This sequence belongs to the class-I aminoacyl-tRNA synthetase family.

It localises to the cytoplasm. The enzyme catalyses tRNA(Arg) + L-arginine + ATP = L-arginyl-tRNA(Arg) + AMP + diphosphate. The sequence is that of Arginine--tRNA ligase (argS) from Methanothermobacter thermautotrophicus (strain ATCC 29096 / DSM 1053 / JCM 10044 / NBRC 100330 / Delta H) (Methanobacterium thermoautotrophicum).